Consider the following 167-residue polypeptide: Dimethylamine corrinoid protein 3 (167 aa).

The region spanning 1-44 (MNEVGVRFERGKLFLPHVMMAADAMTAGVNALKDLMPEGSASSK) is the B12-binding N-terminal domain. A B12-binding domain is found at 45–167 (MGVIVNGTVE…AVTKAKELLA (123 aa)). A methylcob(III)alamin-binding site is contributed by His58.

Belongs to the methylamine corrinoid protein family.

It functions in the pathway one-carbon metabolism; methanogenesis from dimethylamine. Its function is as follows. Acts as a methyl group carrier between MtbB and MtbA. The protein is Dimethylamine corrinoid protein 3 (mtbC3) of Methanosarcina mazei (strain ATCC BAA-159 / DSM 3647 / Goe1 / Go1 / JCM 11833 / OCM 88) (Methanosarcina frisia).